Consider the following 294-residue polypeptide: 4-hydroxy-tetrahydrodipicolinate synthase (294 aa).

Residue Thr45 participates in pyruvate binding. The active-site Proton donor/acceptor is the Tyr133. Catalysis depends on Lys161, which acts as the Schiff-base intermediate with substrate. Residue Ile203 coordinates pyruvate.

This sequence belongs to the DapA family. As to quaternary structure, homotetramer; dimer of dimers.

Its subcellular location is the cytoplasm. It carries out the reaction L-aspartate 4-semialdehyde + pyruvate = (2S,4S)-4-hydroxy-2,3,4,5-tetrahydrodipicolinate + H2O + H(+). It participates in amino-acid biosynthesis; L-lysine biosynthesis via DAP pathway; (S)-tetrahydrodipicolinate from L-aspartate: step 3/4. Catalyzes the condensation of (S)-aspartate-beta-semialdehyde [(S)-ASA] and pyruvate to 4-hydroxy-tetrahydrodipicolinate (HTPA). The chain is 4-hydroxy-tetrahydrodipicolinate synthase from Shewanella pealeana (strain ATCC 700345 / ANG-SQ1).